The primary structure comprises 561 residues: Lipase maturation factor 1 (561 aa).

The segment at 1–32 is disordered; that stretch reads MAAPRESLRRRKAGAGDPEPEAPPGQGRDLKG. The Cytoplasmic segment spans residues 1–42; sequence MAAPRESLRRRKAGAGDPEPEAPPGQGRDLKGRPARLRAGTF. The helical transmembrane segment at 43-65 threads the bilayer; the sequence is WLTRIVLLRALAFVYFVAFLVAF. The Lumenal segment spans residues 66 to 120; that stretch reads HQNKQLIGDRGLLPCRAYLQSVQRHFGGRVSWDALSYAPTILWLLDWSHMDANLD. A helical membrane pass occupies residues 121–144; sequence ALALLGLGISSFILVSGCANMVLM. The Cytoplasmic portion of the chain corresponds to 145-200; that stretch reads AALWVLYMSLVNVGQIWYSFGWESQLLETGFLGIFLCPLWTLSALPRGTPTSWVVM. A helical membrane pass occupies residues 201–214; it reads WGFRWLIFRIMLGA. The Lumenal segment spans residues 215 to 285; it reads GLIKIRGDRC…LGRRMCIVHG (71 aa). Residues 286 to 314 form a helical membrane-spanning segment; the sequence is ALQVLFQVVLIISGNLSFLNWLTIVPSLA. Residues 315–360 are Cytoplasmic-facing; it reads CFDDATLGGLFPSGPGRLKDQVLKIQEEETRGARAPRTRGSVARGT. Residues 361-382 form a helical membrane-spanning segment; the sequence is VNLALGILVAWLSIPVVLNLLS. Topologically, residues 383–561 are lumenal; that stretch reads PRQVMNSSFN…SRQWPYPEPE (179 aa).

Belongs to the lipase maturation factor family. In terms of assembly, interacts with LPL and SEL1L.

It is found in the endoplasmic reticulum membrane. Functionally, involved in the maturation of specific proteins in the endoplasmic reticulum. Required for maturation and transport of active lipoprotein lipase (LPL) through the secretory pathway. Each LMF1 molecule chaperones 50 or more molecules of LPL. This is Lipase maturation factor 1 (LMF1) from Bos taurus (Bovine).